The following is a 317-amino-acid chain: Glutamyl-tRNA reductase-binding protein, chloroplastic (317 aa).

The N-terminal 42 residues, 1–42, are a transit peptide targeting the chloroplast; it reads MQLQTQSFALNLLPSPNFAKPIERREFISLKRDPSRPISLRC.

As to quaternary structure, interacts with HEMA1 and forms a heterotetramer of two GLUTRBP and two HEMA1 subunits.

Its subcellular location is the plastid. It localises to the chloroplast stroma. In terms of biological role, involved in the regulation of glutamyl-tRNA reductase (GluTR) which is important for the synthesis and distribution of 5-aminolevulinate, a precursor in heme and chlorophyll biosynthesis. Stimulates GluTR activity and regulates glutamate-1-semialdehyde release. May play a role in heme metabolism. Necessary for efficient photosynthetic electron transport in chloroplasts. The chain is Glutamyl-tRNA reductase-binding protein, chloroplastic from Arabidopsis thaliana (Mouse-ear cress).